Consider the following 160-residue polypeptide: Deoxyuridine 5'-triphosphate nucleotidohydrolase (160 aa).

Substrate is bound by residues 76–78 (RSG), Asn89, and 93–95 (TID). The segment covering 139–149 (HTLSDTERGED) has biased composition (basic and acidic residues). The tract at residues 139–160 (HTLSDTERGEDGFGSTGHGSHQ) is disordered. A compositionally biased stretch (gly residues) spans 150–160 (GFGSTGHGSHQ).

Belongs to the dUTPase family. Requires Mg(2+) as cofactor.

The enzyme catalyses dUTP + H2O = dUMP + diphosphate + H(+). It participates in pyrimidine metabolism; dUMP biosynthesis; dUMP from dCTP (dUTP route): step 2/2. Functionally, this enzyme is involved in nucleotide metabolism: it produces dUMP, the immediate precursor of thymidine nucleotides and it decreases the intracellular concentration of dUTP so that uracil cannot be incorporated into DNA. This Beijerinckia indica subsp. indica (strain ATCC 9039 / DSM 1715 / NCIMB 8712) protein is Deoxyuridine 5'-triphosphate nucleotidohydrolase.